We begin with the raw amino-acid sequence, 217 residues long: Probable transaldolase (217 aa).

The active-site Schiff-base intermediate with substrate is the K83.

Belongs to the transaldolase family. Type 3B subfamily.

It localises to the cytoplasm. It catalyses the reaction D-sedoheptulose 7-phosphate + D-glyceraldehyde 3-phosphate = D-erythrose 4-phosphate + beta-D-fructose 6-phosphate. It participates in carbohydrate degradation; pentose phosphate pathway; D-glyceraldehyde 3-phosphate and beta-D-fructose 6-phosphate from D-ribose 5-phosphate and D-xylulose 5-phosphate (non-oxidative stage): step 2/3. Transaldolase is important for the balance of metabolites in the pentose-phosphate pathway. The sequence is that of Probable transaldolase from Dinoroseobacter shibae (strain DSM 16493 / NCIMB 14021 / DFL 12).